The following is a 491-amino-acid chain: Tryptophan 5-hydroxylase 2 (491 aa).

Serine 19 carries the post-translational modification Phosphoserine. Residues 33–63 are disordered; it reads NLTVNKSNSGKNDDKKGNKGSSRSETAPDSG. Residues 66–141 form the ACT domain; the sequence is AVVFSLRNEV…TIVTLNPPEN (76 aa). Fe cation is bound by residues histidine 319, histidine 324, and glutamate 364.

Belongs to the biopterin-dependent aromatic amino acid hydroxylase family. Interacts with DNAJC12. The cofactor is Fe(2+).

It catalyses the reaction (6R)-L-erythro-5,6,7,8-tetrahydrobiopterin + L-tryptophan + O2 = 5-hydroxy-L-tryptophan + (4aS,6R)-4a-hydroxy-L-erythro-5,6,7,8-tetrahydrobiopterin. Its pathway is aromatic compound metabolism; serotonin biosynthesis; serotonin from L-tryptophan: step 1/2. The sequence is that of Tryptophan 5-hydroxylase 2 (TPH2) from Equus caballus (Horse).